Consider the following 459-residue polypeptide: Argininosuccinate lyase (459 aa).

Belongs to the lyase 1 family. Argininosuccinate lyase subfamily.

The protein resides in the cytoplasm. The catalysed reaction is 2-(N(omega)-L-arginino)succinate = fumarate + L-arginine. The protein operates within amino-acid biosynthesis; L-arginine biosynthesis; L-arginine from L-ornithine and carbamoyl phosphate: step 3/3. The chain is Argininosuccinate lyase from Staphylococcus aureus (strain Mu3 / ATCC 700698).